The chain runs to 259 residues: Complement factor D (259 aa).

Positions 1–21 are cleaved as a signal peptide; sequence MADRSLHLVVLILLGTALCAA. The propeptide at 22–26 is activation peptide; sequence QPRGR. Positions 27-254 constitute a Peptidase S1 domain; sequence ILRGQEAPSH…YVAWIDGVMA (228 aa). A disulfide bridge connects residues cysteine 52 and cysteine 68. Catalysis depends on charge relay system residues histidine 67 and aspartate 115. 3 disulfides stabilise this stretch: cysteine 149–cysteine 215, cysteine 180–cysteine 196, and cysteine 205–cysteine 230. The active-site Charge relay system is the serine 209. The tract at residues 224-228 is self-inhibitor loop; it reads TSGSR.

It belongs to the peptidase S1 family. Post-translationally, CFD is activated by the removal of 5 residues at the N-terminus, named activation peptide, by the MASP-3 isoform of MASP1.

It localises to the secreted. It catalyses the reaction Selective cleavage of Arg-|-Lys bond in complement factor B when in complex with complement subcomponent C3b or with cobra venom factor.. With respect to regulation, circulates in plasma in a mature but self-inhibited form. Activated by factor B (CFB), which displaces the self-inhibition loop. Associates with CFB complexed with complement C3b. Its function is as follows. Serine protease that initiates the alternative pathway of the complement system, a cascade of proteins that leads to phagocytosis and breakdown of pathogens and signaling that strengthens the adaptive immune system. In contrast to other complement pathways (classical, lectin and GZMK) that are directly activated by pathogens or antigen-antibody complexes, the alternative complement pathway is initiated by the spontaneous hydrolysis of complement C3. The alternative complement pathway acts as an amplification loop that enhances complement activation by mediating the formation of C3 and C5 convertases. Activated CFD cleaves factor B (CFB) when the latter is complexed with complement C3b, activating the C3 convertase of the alternative pathway. The sequence is that of Complement factor D (CFD) from Bos taurus (Bovine).